A 236-amino-acid polypeptide reads, in one-letter code: Phosphoribosylaminoimidazole-succinocarboxamide synthase (236 aa).

This sequence belongs to the SAICAR synthetase family.

It catalyses the reaction 5-amino-1-(5-phospho-D-ribosyl)imidazole-4-carboxylate + L-aspartate + ATP = (2S)-2-[5-amino-1-(5-phospho-beta-D-ribosyl)imidazole-4-carboxamido]succinate + ADP + phosphate + 2 H(+). It participates in purine metabolism; IMP biosynthesis via de novo pathway; 5-amino-1-(5-phospho-D-ribosyl)imidazole-4-carboxamide from 5-amino-1-(5-phospho-D-ribosyl)imidazole-4-carboxylate: step 1/2. This Campylobacter concisus (strain 13826) protein is Phosphoribosylaminoimidazole-succinocarboxamide synthase.